The following is a 195-amino-acid chain: Imidazoleglycerol-phosphate dehydratase (195 aa).

Belongs to the imidazoleglycerol-phosphate dehydratase family.

The protein resides in the cytoplasm. It carries out the reaction D-erythro-1-(imidazol-4-yl)glycerol 3-phosphate = 3-(imidazol-4-yl)-2-oxopropyl phosphate + H2O. Its pathway is amino-acid biosynthesis; L-histidine biosynthesis; L-histidine from 5-phospho-alpha-D-ribose 1-diphosphate: step 6/9. This chain is Imidazoleglycerol-phosphate dehydratase, found in Endomicrobium trichonymphae.